The chain runs to 542 residues: CTP synthase (542 aa).

The segment at 1-266 (MATNYIFVTG…DDLICQRFRL (266 aa)) is amidoligase domain. Position 14 (serine 14) interacts with CTP. Residue serine 14 coordinates UTP. ATP-binding positions include 15–20 (SLGKGI) and aspartate 72. Aspartate 72 and glutamate 140 together coordinate Mg(2+). CTP is bound by residues 147–149 (DIE), 187–192 (KTKPTQ), and lysine 223. Residues 187–192 (KTKPTQ) and lysine 223 each bind UTP. 239–241 (KDV) lines the ATP pocket. The 252-residue stretch at 291-542 (TIGMVGKYVE…VKAAKENQKK (252 aa)) folds into the Glutamine amidotransferase type-1 domain. An L-glutamine-binding site is contributed by glycine 352. Cysteine 379 acts as the Nucleophile; for glutamine hydrolysis in catalysis. L-glutamine contacts are provided by residues 380 to 383 (LGMQ), glutamate 403, and arginine 470. Catalysis depends on residues histidine 515 and glutamate 517.

It belongs to the CTP synthase family. As to quaternary structure, homotetramer.

The catalysed reaction is UTP + L-glutamine + ATP + H2O = CTP + L-glutamate + ADP + phosphate + 2 H(+). It carries out the reaction L-glutamine + H2O = L-glutamate + NH4(+). It catalyses the reaction UTP + NH4(+) + ATP = CTP + ADP + phosphate + 2 H(+). It participates in pyrimidine metabolism; CTP biosynthesis via de novo pathway; CTP from UDP: step 2/2. With respect to regulation, allosterically activated by GTP, when glutamine is the substrate; GTP has no effect on the reaction when ammonia is the substrate. The allosteric effector GTP functions by stabilizing the protein conformation that binds the tetrahedral intermediate(s) formed during glutamine hydrolysis. Inhibited by the product CTP, via allosteric rather than competitive inhibition. In terms of biological role, catalyzes the ATP-dependent amination of UTP to CTP with either L-glutamine or ammonia as the source of nitrogen. Regulates intracellular CTP levels through interactions with the four ribonucleotide triphosphates. In Mannheimia succiniciproducens (strain KCTC 0769BP / MBEL55E), this protein is CTP synthase.